We begin with the raw amino-acid sequence, 325 residues long: MPRPGRNTYSDQKPPYSYISLTAMAIQSSPEKMLPLSEIYKFIMDRFPYYRENTQRWQNSLRHNLSFNDCFIKIPRRPDQPGKGSFWALHPSCGDMFENGSFLRRRKRFKVLKSDHLAPSKPADAAQYLQQQAKLRLSALAASGTHLPQMPAAAYNLGGVAQPSGFKHPFAIENIIAREYKMPGGLAFSAMQPVPAAYPLPNQLTTMGSSLGTGWPHVYGSAGMIDSATPISMASGDYSAYGVPLKPLCHAAGQTLPAIPVPIKPTPAAVPALPALPAPIPTLLSNSPPSLSPTSSQTATSQSSPATPSETLTSPASALHSVAVH.

The segment at residues 12-103 (QKPPYSYISL…GDMFENGSFL (92 aa)) is a DNA-binding region (fork-head). A compositionally biased stretch (low complexity) spans 284-309 (LSNSPPSLSPTSSQTATSQSSPATPS). Residues 284 to 325 (LSNSPPSLSPTSSQTATSQSSPATPSETLTSPASALHSVAVH) are disordered.

The protein localises to the nucleus. Functionally, transcription factor expressed by neural progenitor cells in specific regions of the embryonic neuroepithelium. Essential for the mammillary nuclei maintenance. Negatively regulates the proliferation of oligodendrocyte progenitors and promotes oligodendrocyte maturation. Also expressed in mammary glands, plays a role in lactation, controls development of mammary glands and the inferior colliculi of the midbrain in the central nervous system that regulates the milk-ejection reflex. The sequence is that of Forkhead box protein B1 (FOXB1) from Homo sapiens (Human).